A 107-amino-acid polypeptide reads, in one-letter code: YcgL domain-containing protein Pcryo_0807 (107 aa).

A YcgL domain is found at 1–95 (MHCDIYKFLK…QDVMRRQAEL (95 aa)).

The polypeptide is YcgL domain-containing protein Pcryo_0807 (Psychrobacter cryohalolentis (strain ATCC BAA-1226 / DSM 17306 / VKM B-2378 / K5)).